Reading from the N-terminus, the 369-residue chain is UDP-N-acetyl-3-dehydro-alpha-D-glucosamine 3-aminotranferase (369 aa).

Lys-190 carries the N6-(pyridoxal phosphate)lysine modification.

The protein belongs to the DegT/DnrJ/EryC1 family. Pyridoxal 5'-phosphate is required as a cofactor.

It catalyses the reaction UDP-2-acetamido-3-amino-2,3-dideoxy-alpha-D-glucopyranose + 2-oxoglutarate = UDP-2-acetamido-3-dehydro-2-deoxy-alpha-D-glucopyranose + L-glutamate. Its pathway is bacterial outer membrane biogenesis; LPS lipid A biosynthesis. In terms of biological role, aminotranferase involved in the synthesis of 2,3-diamino-2,3-dideoxy-D-glucopyranose (GlcN3N), which is a component of lipid A in some species. Catalyzes the amination of UDP-2-acetamido-3-dehydro-2-deoxy-alpha-D-glucopyranose (UDP-3-oxo-GlcNAc) to UDP-2-acetamido-3-amino-2,3-dideoxy-alpha-D-glucopyranose (UDP-GlcNAc3N), using L-glutamate as the amine donor. Other amine donors, such as alanine and glutamine, can substitute for glutamate, but product formation is slower. The sequence is that of UDP-N-acetyl-3-dehydro-alpha-D-glucosamine 3-aminotranferase from Acidithiobacillus ferrooxidans (strain ATCC 23270 / DSM 14882 / CIP 104768 / NCIMB 8455) (Ferrobacillus ferrooxidans (strain ATCC 23270)).